The chain runs to 320 residues: Aristolochene synthase (320 aa).

Over residues 1 to 14 (MKKPNGTNGASSSL) the composition is skewed to polar residues. Residues 1–20 (MKKPNGTNGASSSLEPPPST) are disordered. Mg(2+) contacts are provided by D90, N219, S223, and E227. (2E,6E)-farnesyl diphosphate is bound by residues R314 and Y315.

This sequence belongs to the terpene synthase family. As to quaternary structure, homodimer. The cofactor is Mg(2+).

The catalysed reaction is (2E,6E)-farnesyl diphosphate = (+)-aristolochene + diphosphate. It functions in the pathway sesquiterpene biosynthesis; aristolochene biosynthesis; aristolochene from farnesyl diphosphate: step 1/1. Its function is as follows. Catalyzes the cyclization of trans,trans-farnesyl diphosphate (FPP) to the bicyclic sesquiterpene aristolochene. Produces germacrene A as an enzyme-bound intermediate that is not released by the enzyme, but is further cyclized to produce aristolochene. Aristolochene is the likely parent compound for a number of sesquiterpenoid toxins produced by filamentous fungi. This is Aristolochene synthase (Ari1) from Aspergillus terreus.